The sequence spans 272 residues: 2-succinyl-6-hydroxy-2,4-cyclohexadiene-1-carboxylate synthase (272 aa).

Belongs to the AB hydrolase superfamily. MenH family. As to quaternary structure, monomer.

The enzyme catalyses 5-enolpyruvoyl-6-hydroxy-2-succinyl-cyclohex-3-ene-1-carboxylate = (1R,6R)-6-hydroxy-2-succinyl-cyclohexa-2,4-diene-1-carboxylate + pyruvate. It participates in quinol/quinone metabolism; 1,4-dihydroxy-2-naphthoate biosynthesis; 1,4-dihydroxy-2-naphthoate from chorismate: step 3/7. Its pathway is quinol/quinone metabolism; menaquinone biosynthesis. Functionally, catalyzes a proton abstraction reaction that results in 2,5-elimination of pyruvate from 2-succinyl-5-enolpyruvyl-6-hydroxy-3-cyclohexene-1-carboxylate (SEPHCHC) and the formation of 2-succinyl-6-hydroxy-2,4-cyclohexadiene-1-carboxylate (SHCHC). The chain is 2-succinyl-6-hydroxy-2,4-cyclohexadiene-1-carboxylate synthase from Yersinia pseudotuberculosis serotype I (strain IP32953).